The following is a 178-amino-acid chain: ATP-dependent protease subunit HslV (178 aa).

Threonine 7 is a catalytic residue. Glycine 162, cysteine 165, and threonine 168 together coordinate Na(+).

Belongs to the peptidase T1B family. HslV subfamily. As to quaternary structure, a double ring-shaped homohexamer of HslV is capped on each side by a ring-shaped HslU homohexamer. The assembly of the HslU/HslV complex is dependent on binding of ATP.

The protein resides in the cytoplasm. It catalyses the reaction ATP-dependent cleavage of peptide bonds with broad specificity.. Its activity is regulated as follows. Allosterically activated by HslU binding. Protease subunit of a proteasome-like degradation complex believed to be a general protein degrading machinery. The sequence is that of ATP-dependent protease subunit HslV from Leptothrix cholodnii (strain ATCC 51168 / LMG 8142 / SP-6) (Leptothrix discophora (strain SP-6)).